A 96-amino-acid chain; its full sequence is MKNATSLIIYCFLMFLLMNNVKGQGKKKPPCPLGLSANGKCGHDGPKLCFSEMERKFNKDVVKTITHCKCWDDRRNNVDKHRCTCYLKHGFPCTNG.

The signal sequence occupies residues 1-23 (MKNATSLIIYCFLMFLLMNNVKG). 4 disulfide bridges follow: Cys31–Cys93, Cys41–Cys70, Cys49–Cys83, and Cys68–Cys85.

The protein belongs to the DEFL family.

It localises to the secreted. This Arabidopsis thaliana (Mouse-ear cress) protein is Putative defensin-like protein 236 (SCRL20).